A 216-amino-acid polypeptide reads, in one-letter code: Urease accessory protein UreG (216 aa).

Residue 24–31 coordinates GTP; that stretch reads GPVGSGKT.

The protein belongs to the SIMIBI class G3E GTPase family. UreG subfamily. Homodimer. UreD, UreF and UreG form a complex that acts as a GTP-hydrolysis-dependent molecular chaperone, activating the urease apoprotein by helping to assemble the nickel containing metallocenter of UreC. The UreE protein probably delivers the nickel.

The protein resides in the cytoplasm. Facilitates the functional incorporation of the urease nickel metallocenter. This process requires GTP hydrolysis, probably effectuated by UreG. This Variovorax paradoxus (strain S110) protein is Urease accessory protein UreG.